Consider the following 222-residue polypeptide: Large ribosomal subunit protein uL4 (222 aa).

This sequence belongs to the universal ribosomal protein uL4 family. As to quaternary structure, part of the 50S ribosomal subunit.

In terms of biological role, one of the primary rRNA binding proteins, this protein initially binds near the 5'-end of the 23S rRNA. It is important during the early stages of 50S assembly. It makes multiple contacts with different domains of the 23S rRNA in the assembled 50S subunit and ribosome. Functionally, forms part of the polypeptide exit tunnel. The chain is Large ribosomal subunit protein uL4 from Methylacidiphilum infernorum (isolate V4) (Methylokorus infernorum (strain V4)).